A 1342-amino-acid chain; its full sequence is DNA-directed RNA polymerase subunit beta (1342 aa).

The protein belongs to the RNA polymerase beta chain family. In terms of assembly, the RNAP catalytic core consists of 2 alpha, 1 beta, 1 beta' and 1 omega subunit. When a sigma factor is associated with the core the holoenzyme is formed, which can initiate transcription.

The enzyme catalyses RNA(n) + a ribonucleoside 5'-triphosphate = RNA(n+1) + diphosphate. Its function is as follows. DNA-dependent RNA polymerase catalyzes the transcription of DNA into RNA using the four ribonucleoside triphosphates as substrates. The polypeptide is DNA-directed RNA polymerase subunit beta (Blochmanniella floridana).